A 241-amino-acid polypeptide reads, in one-letter code: 1-(5-phosphoribosyl)-5-[(5-phosphoribosylamino)methylideneamino] imidazole-4-carboxamide isomerase (241 aa).

The active-site Proton acceptor is D8. Catalysis depends on D130, which acts as the Proton donor.

Belongs to the HisA/HisF family.

The protein resides in the cytoplasm. It catalyses the reaction 1-(5-phospho-beta-D-ribosyl)-5-[(5-phospho-beta-D-ribosylamino)methylideneamino]imidazole-4-carboxamide = 5-[(5-phospho-1-deoxy-D-ribulos-1-ylimino)methylamino]-1-(5-phospho-beta-D-ribosyl)imidazole-4-carboxamide. It functions in the pathway amino-acid biosynthesis; L-histidine biosynthesis; L-histidine from 5-phospho-alpha-D-ribose 1-diphosphate: step 4/9. The chain is 1-(5-phosphoribosyl)-5-[(5-phosphoribosylamino)methylideneamino] imidazole-4-carboxamide isomerase from Flavobacterium psychrophilum (strain ATCC 49511 / DSM 21280 / CIP 103535 / JIP02/86).